The chain runs to 486 residues: tRNA-2-methylthio-N(6)-dimethylallyladenosine synthase (486 aa).

An MTTase N-terminal domain is found at 35-151; the sequence is RNLYVESYGC…LPRLLATVDS (117 aa). Cysteine 44, cysteine 80, cysteine 114, cysteine 189, cysteine 193, and cysteine 196 together coordinate [4Fe-4S] cluster. The Radical SAM core domain occupies 175 to 419; that stretch reads NSNGVSAFIS…IDKQRQHSFE (245 aa). The region spanning 422–485 is the TRAM domain; the sequence is LKDIGKVYQV…TGTLLGEICT (64 aa).

The protein belongs to the methylthiotransferase family. MiaB subfamily. Monomer. It depends on [4Fe-4S] cluster as a cofactor.

It is found in the cytoplasm. It catalyses the reaction N(6)-dimethylallyladenosine(37) in tRNA + (sulfur carrier)-SH + AH2 + 2 S-adenosyl-L-methionine = 2-methylsulfanyl-N(6)-dimethylallyladenosine(37) in tRNA + (sulfur carrier)-H + 5'-deoxyadenosine + L-methionine + A + S-adenosyl-L-homocysteine + 2 H(+). In terms of biological role, catalyzes the methylthiolation of N6-(dimethylallyl)adenosine (i(6)A), leading to the formation of 2-methylthio-N6-(dimethylallyl)adenosine (ms(2)i(6)A) at position 37 in tRNAs that read codons beginning with uridine. The chain is tRNA-2-methylthio-N(6)-dimethylallyladenosine synthase from Amoebophilus asiaticus (strain 5a2).